Consider the following 404-residue polypeptide: Cysteine desulfurase IscS (404 aa).

Pyridoxal 5'-phosphate-binding positions include alanine 75–threonine 76, asparagine 155, glutamine 183, and serine 203–histidine 205. An N6-(pyridoxal phosphate)lysine modification is found at lysine 206. Threonine 243 contributes to the pyridoxal 5'-phosphate binding site. Catalysis depends on cysteine 328, which acts as the Cysteine persulfide intermediate. Cysteine 328 is a [2Fe-2S] cluster binding site.

This sequence belongs to the class-V pyridoxal-phosphate-dependent aminotransferase family. NifS/IscS subfamily. In terms of assembly, homodimer. Forms a heterotetramer with IscU, interacts with other sulfur acceptors. The cofactor is pyridoxal 5'-phosphate.

The protein localises to the cytoplasm. The enzyme catalyses (sulfur carrier)-H + L-cysteine = (sulfur carrier)-SH + L-alanine. Its pathway is cofactor biosynthesis; iron-sulfur cluster biosynthesis. In terms of biological role, master enzyme that delivers sulfur to a number of partners involved in Fe-S cluster assembly, tRNA modification or cofactor biosynthesis. Catalyzes the removal of elemental sulfur atoms from cysteine to produce alanine. Functions as a sulfur delivery protein for Fe-S cluster synthesis onto IscU, an Fe-S scaffold assembly protein, as well as other S acceptor proteins. This Pectobacterium atrosepticum (strain SCRI 1043 / ATCC BAA-672) (Erwinia carotovora subsp. atroseptica) protein is Cysteine desulfurase IscS.